The sequence spans 533 residues: D-3-phosphoglycerate dehydrogenase (533 aa).

A2 bears the N-acetylalanine mark. Residue S14 is modified to Phosphoserine. N6-acetyllysine; alternate is present on K21. A Glycyl lysine isopeptide (Lys-Gly) (interchain with G-Cter in SUMO1); alternate cross-link involves residue K21. Residue K21 forms a Glycyl lysine isopeptide (Lys-Gly) (interchain with G-Cter in SUMO2); alternate linkage. K58 carries the post-translational modification N6-acetyllysine. Residues T78, 155-156, D175, T207, 234-236, and D260 contribute to the NAD(+) site; these read RI and CAR. The residue at position 78 (T78) is a Phosphothreonine. R236 is an active-site residue. Residue E265 is part of the active site. The active-site Proton donor is the H283. 283-286 contributes to the NAD(+) binding site; sequence HLGA.

Belongs to the D-isomer specific 2-hydroxyacid dehydrogenase family. As to quaternary structure, homotetramer.

The catalysed reaction is (2R)-3-phosphoglycerate + NAD(+) = 3-phosphooxypyruvate + NADH + H(+). It catalyses the reaction (R)-2-hydroxyglutarate + NAD(+) = 2-oxoglutarate + NADH + H(+). The enzyme catalyses (S)-malate + NAD(+) = oxaloacetate + NADH + H(+). Its pathway is amino-acid biosynthesis; L-serine biosynthesis; L-serine from 3-phospho-D-glycerate: step 1/3. Catalyzes the reversible oxidation of 3-phospho-D-glycerate to 3-phosphonooxypyruvate, the first step of the phosphorylated L-serine biosynthesis pathway. Also catalyzes the reversible oxidation of 2-hydroxyglutarate to 2-oxoglutarate and the reversible oxidation of (S)-malate to oxaloacetate. The chain is D-3-phosphoglycerate dehydrogenase (PHGDH) from Homo sapiens (Human).